A 450-amino-acid chain; its full sequence is Tubulin alpha-1 chain (450 aa).

GTP contacts are provided by Gln11, Glu71, Gly144, Thr145, Thr179, Asn206, and Asn228. Mg(2+) is bound at residue Glu71. Glu254 is an active-site residue. Thr349 is modified (phosphothreonine). A disordered region spans residues 431–450 (DYEEVGGEGAEDDDEEGDEY).

Belongs to the tubulin family. Dimer of alpha and beta chains. A typical microtubule is a hollow water-filled tube with an outer diameter of 25 nm and an inner diameter of 15 nM. Alpha-beta heterodimers associate head-to-tail to form protofilaments running lengthwise along the microtubule wall with the beta-tubulin subunit facing the microtubule plus end conferring a structural polarity. Microtubules usually have 13 protofilaments but different protofilament numbers can be found in some organisms and specialized cells. Requires Mg(2+) as cofactor. Post-translationally, undergoes a tyrosination/detyrosination cycle, the cyclic removal and re-addition of a C-terminal tyrosine residue by the enzymes tubulin tyrosine carboxypeptidase (TTCP) and tubulin tyrosine ligase (TTL), respectively.

It localises to the cytoplasm. Its subcellular location is the cytoskeleton. It carries out the reaction GTP + H2O = GDP + phosphate + H(+). Tubulin is the major constituent of microtubules, a cylinder consisting of laterally associated linear protofilaments composed of alpha- and beta-tubulin heterodimers. Microtubules grow by the addition of GTP-tubulin dimers to the microtubule end, where a stabilizing cap forms. Below the cap, tubulin dimers are in GDP-bound state, owing to GTPase activity of alpha-tubulin. This chain is Tubulin alpha-1 chain (TUBA1), found in Arabidopsis thaliana (Mouse-ear cress).